Here is a 357-residue protein sequence, read N- to C-terminus: tRNA/tmRNA (uracil-C(5))-methyltransferase (357 aa).

Positions 180, 209, 214, 230, and 290 each coordinate S-adenosyl-L-methionine. Catalysis depends on cysteine 315, which acts as the Nucleophile. Glutamate 349 acts as the Proton acceptor in catalysis.

This sequence belongs to the class I-like SAM-binding methyltransferase superfamily. RNA M5U methyltransferase family. TrmA subfamily.

It catalyses the reaction uridine(54) in tRNA + S-adenosyl-L-methionine = 5-methyluridine(54) in tRNA + S-adenosyl-L-homocysteine + H(+). It carries out the reaction uridine(341) in tmRNA + S-adenosyl-L-methionine = 5-methyluridine(341) in tmRNA + S-adenosyl-L-homocysteine + H(+). In terms of biological role, dual-specificity methyltransferase that catalyzes the formation of 5-methyluridine at position 54 (m5U54) in all tRNAs, and that of position 341 (m5U341) in tmRNA (transfer-mRNA). The polypeptide is tRNA/tmRNA (uracil-C(5))-methyltransferase (Campylobacter jejuni subsp. jejuni serotype O:2 (strain ATCC 700819 / NCTC 11168)).